We begin with the raw amino-acid sequence, 73 residues long: Putative membrane protein insertion efficiency factor (73 aa).

It belongs to the UPF0161 family.

It is found in the cell inner membrane. In terms of biological role, could be involved in insertion of integral membrane proteins into the membrane. This chain is Putative membrane protein insertion efficiency factor, found in Neisseria meningitidis serogroup C (strain 053442).